A 126-amino-acid chain; its full sequence is CD59 glycoprotein (126 aa).

Residues methionine 1–serine 22 form the signal peptide. Positions leucine 23–threonine 110 constitute a UPAR/Ly6 domain. Disulfide bonds link cysteine 25–cysteine 48, cysteine 28–cysteine 35, cysteine 41–cysteine 61, cysteine 67–cysteine 85, and cysteine 86–cysteine 91. Asparagine 38 carries an N-linked (GlcNAc...) asparagine glycan. The GPI-anchor amidated asparagine moiety is linked to residue asparagine 101. Residues glycine 102 to phenylalanine 126 constitute a propeptide, removed in mature form.

Interacts with T-cell surface antigen CD2. In terms of processing, N- and O-glycosylated.

It is found in the cell membrane. The protein localises to the secreted. Functionally, potent inhibitor of the complement membrane attack complex (MAC) action, which protects self-cells from damage during complement activation. Acts by binding to the beta-haipins of C8 (C8A and C8B) components of the assembling MAC, forming an intermolecular beta-sheet that prevents incorporation of the multiple copies of C9 required for complete formation of the osmolytic pore. The sequence is that of CD59 glycoprotein from Rattus norvegicus (Rat).